We begin with the raw amino-acid sequence, 322 residues long: UDP-N-acetylenolpyruvoylglucosamine reductase (322 aa).

Positions 36 to 202 constitute an FAD-binding PCMH-type domain; that stretch reads RAGGPAQVLF…TSVLFEGVPG (167 aa). R182 is an active-site residue. S231 functions as the Proton donor in the catalytic mechanism. E301 is an active-site residue.

This sequence belongs to the MurB family. FAD serves as cofactor.

It localises to the cytoplasm. It catalyses the reaction UDP-N-acetyl-alpha-D-muramate + NADP(+) = UDP-N-acetyl-3-O-(1-carboxyvinyl)-alpha-D-glucosamine + NADPH + H(+). Its pathway is cell wall biogenesis; peptidoglycan biosynthesis. Its function is as follows. Cell wall formation. This chain is UDP-N-acetylenolpyruvoylglucosamine reductase, found in Brucella canis (strain ATCC 23365 / NCTC 10854 / RM-666).